Reading from the N-terminus, the 620-residue chain is Glutathione-regulated potassium-efflux system protein KefC (620 aa).

12 helical membrane passes run 4–24 (HTLI…PIAV), 26–46 (LGLG…PWGL), 54–74 (SILH…GLEL), 90–110 (GALQ…LLGL), 114–134 (VAEL…MQAM), 149–169 (FAVL…IPLL), 178–198 (MGAF…VVLL), 218–238 (VFSA…EEVG), 270–290 (GLLL…GTLL), 294–314 (LRIV…LWLI), 327–347 (WFAV…GAAQ), and 359–379 (SLTL…VILN). The region spanning 399-518 (QPRVIIAGFG…AGVEKPERET (120 aa)) is the RCK N-terminal domain. Residues 597–620 (GWQGTEEGKHTGNMADEPETKPSS) are disordered.

Belongs to the monovalent cation:proton antiporter 2 (CPA2) transporter (TC 2.A.37) family. KefC subfamily. Homodimer. Interacts with the regulatory subunit KefF.

Its subcellular location is the cell inner membrane. Pore-forming subunit of a potassium efflux system that confers protection against electrophiles. Catalyzes K(+)/H(+) antiport. In Escherichia coli (strain K12 / MC4100 / BW2952), this protein is Glutathione-regulated potassium-efflux system protein KefC.